The primary structure comprises 357 residues: Fulicin peptides (357 aa).

The first 17 residues, 1-17, serve as a signal peptide directing secretion; it reads MQPTVLLILMTSCLTYQ. Residues 18-119 constitute a propeptide that is removed on maturation; sequence VIADKPKGNH…VDGSQGHLEP (102 aa). Asparagine 123 bears the D-asparagine mark. At valine 126 the chain carries Valine amide. Residues 130 to 194 constitute a propeptide that is removed on maturation; that stretch reads NTLPEEAGSF…YNTMNEDEAS (65 aa). Valine amide is present on residues valine 201 and valine 209. Leucine amide is present on residues leucine 217 and leucine 226. An isoleucine amide mark is found at isoleucine 233 and isoleucine 242. 2 positions are modified to valine amide: valine 250 and valine 259. The propeptide occupies 263 to 298; it reads NQGVFTVSPSSTKISFDDNYLPYLSSVDAGDLSDVN. Leucine 305 carries the post-translational modification Leucine amide. Positions 311 to 357 are excised as a propeptide; that stretch reads TAEQDETSQRSNERLVALLQNTGFRKRLSRMLQNQRLVEHYPEFIGK.

Found in central ganglia and the ventricles and atria of the heart.

In terms of biological role, potentiates tetanic contraction of the penis retractor muscle at very low concentrations, and also shows modulatory actions on the activity of the buccal and ventricular muscles and the central ganglionic neurons. This is Fulicin peptides from Lissachatina fulica (Giant African land snail).